A 435-amino-acid chain; its full sequence is Glucoside xylosyltransferase 1 (435 aa).

The Cytoplasmic segment spans residues 1-6 (MRRYLR). Residues 7 to 29 (VVGLCLACGFCSLLYAFSQLAVS) form a helical; Signal-anchor for type II membrane protein membrane-spanning segment. Over 30 to 435 (LEEGAAVGRR…NRYDTPPKER (406 aa)) the chain is Lumenal. Asn-168 and Asn-232 each carry an N-linked (GlcNAc...) asparagine glycan.

It belongs to the glycosyltransferase 8 family.

The protein resides in the membrane. The enzyme catalyses 3-O-(beta-D-glucosyl)-L-seryl-[EGF-like domain protein] + UDP-alpha-D-xylose = 3-O-[alpha-D-xylosyl-(1-&gt;3)-beta-D-glucosyl]-L-seryl-[EGF-like domain protein] + UDP + H(+). Its function is as follows. Glycosyltransferase which elongates the O-linked glucose attached to EGF-like repeats in the extracellular domain of Notch proteins by catalyzing the addition of xylose. The protein is Glucoside xylosyltransferase 1 (Gxylt1) of Rattus norvegicus (Rat).